The following is a 450-amino-acid chain: Bifunctional protein GlmU (450 aa).

The pyrophosphorylase stretch occupies residues 1–229; that stretch reads MRRHAIILAA…VEEIMGVNDR (229 aa). UDP-N-acetyl-alpha-D-glucosamine is bound by residues 8 to 11, Lys-22, Gln-72, and 77 to 78; these read LAAG and GT. Position 102 (Asp-102) interacts with Mg(2+). Gly-139, Glu-154, and Asn-227 together coordinate UDP-N-acetyl-alpha-D-glucosamine. Residue Asn-227 participates in Mg(2+) binding. The segment at 230-250 is linker; it reads VMLSQAENAMQRRTNHYHMLN. The N-acetyltransferase stretch occupies residues 251-450; it reads GVTIIDPDST…RQTTKEGYRK (200 aa). Residues Arg-332 and Lys-350 each coordinate UDP-N-acetyl-alpha-D-glucosamine. His-362 acts as the Proton acceptor in catalysis. Positions 365 and 376 each coordinate UDP-N-acetyl-alpha-D-glucosamine. Residues 385-386, Ala-422, and Arg-439 contribute to the acetyl-CoA site; that span reads NY.

This sequence in the N-terminal section; belongs to the N-acetylglucosamine-1-phosphate uridyltransferase family. It in the C-terminal section; belongs to the transferase hexapeptide repeat family. As to quaternary structure, homotrimer. Requires Mg(2+) as cofactor.

The protein resides in the cytoplasm. The enzyme catalyses alpha-D-glucosamine 1-phosphate + acetyl-CoA = N-acetyl-alpha-D-glucosamine 1-phosphate + CoA + H(+). It carries out the reaction N-acetyl-alpha-D-glucosamine 1-phosphate + UTP + H(+) = UDP-N-acetyl-alpha-D-glucosamine + diphosphate. It functions in the pathway nucleotide-sugar biosynthesis; UDP-N-acetyl-alpha-D-glucosamine biosynthesis; N-acetyl-alpha-D-glucosamine 1-phosphate from alpha-D-glucosamine 6-phosphate (route II): step 2/2. The protein operates within nucleotide-sugar biosynthesis; UDP-N-acetyl-alpha-D-glucosamine biosynthesis; UDP-N-acetyl-alpha-D-glucosamine from N-acetyl-alpha-D-glucosamine 1-phosphate: step 1/1. Its pathway is bacterial outer membrane biogenesis; LPS lipid A biosynthesis. In terms of biological role, catalyzes the last two sequential reactions in the de novo biosynthetic pathway for UDP-N-acetylglucosamine (UDP-GlcNAc). The C-terminal domain catalyzes the transfer of acetyl group from acetyl coenzyme A to glucosamine-1-phosphate (GlcN-1-P) to produce N-acetylglucosamine-1-phosphate (GlcNAc-1-P), which is converted into UDP-GlcNAc by the transfer of uridine 5-monophosphate (from uridine 5-triphosphate), a reaction catalyzed by the N-terminal domain. In Staphylococcus aureus (strain MRSA252), this protein is Bifunctional protein GlmU.